We begin with the raw amino-acid sequence, 70 residues long: ATP synthase subunit c (70 aa).

The next 2 helical transmembrane spans lie at 4-24 and 48-68; these read IAAG…NGML and ISMA…FVLI.

This sequence belongs to the ATPase C chain family. As to quaternary structure, F-type ATPases have 2 components, F(1) - the catalytic core - and F(0) - the membrane proton channel. F(1) has five subunits: alpha(3), beta(3), gamma(1), delta(1), epsilon(1). F(0) has three main subunits: a(1), b(2) and c(10-14). The alpha and beta chains form an alternating ring which encloses part of the gamma chain. F(1) is attached to F(0) by a central stalk formed by the gamma and epsilon chains, while a peripheral stalk is formed by the delta and b chains.

It localises to the cell membrane. Functionally, f(1)F(0) ATP synthase produces ATP from ADP in the presence of a proton or sodium gradient. F-type ATPases consist of two structural domains, F(1) containing the extramembraneous catalytic core and F(0) containing the membrane proton channel, linked together by a central stalk and a peripheral stalk. During catalysis, ATP synthesis in the catalytic domain of F(1) is coupled via a rotary mechanism of the central stalk subunits to proton translocation. In terms of biological role, key component of the F(0) channel; it plays a direct role in translocation across the membrane. A homomeric c-ring of between 10-14 subunits forms the central stalk rotor element with the F(1) delta and epsilon subunits. The protein is ATP synthase subunit c of Oenococcus oeni (strain ATCC BAA-331 / PSU-1).